The sequence spans 439 residues: Glutamyl-tRNA reductase (439 aa).

Substrate is bound by residues 48–51, S107, 112–114, and Q118; these read TCNR and EPQ. The Nucleophile role is filled by C49. 187–192 is an NADP(+) binding site; it reads GAGEMA.

Belongs to the glutamyl-tRNA reductase family. In terms of assembly, homodimer.

It carries out the reaction (S)-4-amino-5-oxopentanoate + tRNA(Glu) + NADP(+) = L-glutamyl-tRNA(Glu) + NADPH + H(+). Its pathway is porphyrin-containing compound metabolism; protoporphyrin-IX biosynthesis; 5-aminolevulinate from L-glutamyl-tRNA(Glu): step 1/2. In terms of biological role, catalyzes the NADPH-dependent reduction of glutamyl-tRNA(Glu) to glutamate 1-semialdehyde (GSA). The sequence is that of Glutamyl-tRNA reductase from Maridesulfovibrio salexigens (strain ATCC 14822 / DSM 2638 / NCIMB 8403 / VKM B-1763) (Desulfovibrio salexigens).